Here is a 192-residue protein sequence, read N- to C-terminus: Peptidyl-tRNA hydrolase (192 aa).

Tyr-17 serves as a coordination point for tRNA. The Proton acceptor role is filled by His-22. TRNA contacts are provided by Phe-68, Asn-70, and Asn-116.

This sequence belongs to the PTH family. In terms of assembly, monomer.

It localises to the cytoplasm. The catalysed reaction is an N-acyl-L-alpha-aminoacyl-tRNA + H2O = an N-acyl-L-amino acid + a tRNA + H(+). Its function is as follows. Hydrolyzes ribosome-free peptidyl-tRNAs (with 1 or more amino acids incorporated), which drop off the ribosome during protein synthesis, or as a result of ribosome stalling. Catalyzes the release of premature peptidyl moieties from peptidyl-tRNA molecules trapped in stalled 50S ribosomal subunits, and thus maintains levels of free tRNAs and 50S ribosomes. In Buchnera aphidicola subsp. Cinara cedri (strain Cc), this protein is Peptidyl-tRNA hydrolase.